The chain runs to 597 residues: 2-isopropylmalate synthase (597 aa).

The interval 1–80 (MQLDIDRLVA…QKNESLERTE (80 aa)) is unknown. Positions 87 to 349 (VIIFDTTLRD…ETGIDTTQIV (263 aa)) constitute a Pyruvate carboxyltransferase domain. Residues 87-349 (VIIFDTTLRD…ETGIDTTQIV (263 aa)) are 2-isopropylmalate synthase. Aspartate 96, histidine 284, histidine 286, and asparagine 320 together coordinate Mn(2+). Residues 475 to 597 (KFISQKISTE…KPKAQGSGTI (123 aa)) are regulatory domain.

The protein belongs to the alpha-IPM synthase/homocitrate synthase family. LeuA type 1 subfamily. Homodimer. Mn(2+) is required as a cofactor.

It is found in the cytoplasm. It carries out the reaction 3-methyl-2-oxobutanoate + acetyl-CoA + H2O = (2S)-2-isopropylmalate + CoA + H(+). Its pathway is amino-acid biosynthesis; L-leucine biosynthesis; L-leucine from 3-methyl-2-oxobutanoate: step 1/4. In terms of biological role, catalyzes the condensation of the acetyl group of acetyl-CoA with 3-methyl-2-oxobutanoate (2-ketoisovalerate) to form 3-carboxy-3-hydroxy-4-methylpentanoate (2-isopropylmalate). In Neisseria gonorrhoeae (strain ATCC 700825 / FA 1090), this protein is 2-isopropylmalate synthase.